Reading from the N-terminus, the 68-residue chain is Cytochrome c3 (68 aa).

Heme-binding residues include histidine 17, histidine 20, cysteine 26, cysteine 29, histidine 30, histidine 45, cysteine 49, cysteine 52, histidine 53, cysteine 62, cysteine 65, and histidine 66.

Binds 3 heme groups per subunit.

In terms of biological role, participates in sulfate respiration coupled with phosphorylation by transferring electrons from the enzyme dehydrogenase to ferredoxin. In Desulfuromonas acetoxidans (Chloropseudomonas ethylica), this protein is Cytochrome c3 (cyd).